A 214-amino-acid polypeptide reads, in one-letter code: Adenylate kinase (214 aa).

ATP is bound at residue 10–15; sequence GAGKGT. The NMP stretch occupies residues 30–59; the sequence is STGDMLRAAVKAGTPLGLEAKKVMDAGQLV. Residues threonine 31, arginine 36, 57-59, 85-88, and glutamine 92 each bind AMP; these read QLV and GFPR. The LID stretch occupies residues 122-159; sequence GRRVHPGSGRVYHVVFNPPKVEGKDDVTGEDLAIRPDD. Residues arginine 123 and 132–133 contribute to the ATP site; that span reads VY. AMP-binding residues include arginine 156 and arginine 167. An ATP-binding site is contributed by glutamine 200.

This sequence belongs to the adenylate kinase family. As to quaternary structure, monomer.

The protein localises to the cytoplasm. It catalyses the reaction AMP + ATP = 2 ADP. The protein operates within purine metabolism; AMP biosynthesis via salvage pathway; AMP from ADP: step 1/1. Functionally, catalyzes the reversible transfer of the terminal phosphate group between ATP and AMP. Plays an important role in cellular energy homeostasis and in adenine nucleotide metabolism. In Shewanella baltica (strain OS155 / ATCC BAA-1091), this protein is Adenylate kinase.